We begin with the raw amino-acid sequence, 462 residues long: Argininosuccinate lyase (462 aa).

Belongs to the lyase 1 family. Argininosuccinate lyase subfamily.

The protein resides in the cytoplasm. It carries out the reaction 2-(N(omega)-L-arginino)succinate = fumarate + L-arginine. The protein operates within amino-acid biosynthesis; L-arginine biosynthesis; L-arginine from L-ornithine and carbamoyl phosphate: step 3/3. This is Argininosuccinate lyase from Methylobacterium nodulans (strain LMG 21967 / CNCM I-2342 / ORS 2060).